The primary structure comprises 287 residues: ATP synthase subunit a (287 aa).

The next 6 membrane-spanning stretches (helical) occupy residues 37–57 (LDSV…MWLA), 96–116 (FIAP…AMDL), 149–169 (LGLS…IKGL), 187–207 (PVFA…EYVA), 224–244 (ELVF…LSGV), and 266–286 (TLQA…AHEA).

It belongs to the ATPase A chain family. In terms of assembly, F-type ATPases have 2 components, CF(1) - the catalytic core - and CF(0) - the membrane proton channel. CF(1) has five subunits: alpha(3), beta(3), gamma(1), delta(1), epsilon(1). CF(0) has three main subunits: a(1), b(2) and c(9-12). The alpha and beta chains form an alternating ring which encloses part of the gamma chain. CF(1) is attached to CF(0) by a central stalk formed by the gamma and epsilon chains, while a peripheral stalk is formed by the delta and b chains.

Its subcellular location is the cell inner membrane. Its function is as follows. Key component of the proton channel; it plays a direct role in the translocation of protons across the membrane. In Acidovorax sp. (strain JS42), this protein is ATP synthase subunit a.